We begin with the raw amino-acid sequence, 412 residues long: Glucose/galactose transporter (412 aa).

11 consecutive transmembrane segments (helical) span residues 21–41 (YGFA…ITCL), 62–82 (LIQF…GQLV), 90–110 (GIVV…PAAS), 113–133 (VYAL…ILQV), 158–178 (FNSL…LSAA), 192–212 (FPYL…AILK), 239–259 (LGAI…SFLV), 310–330 (AFVA…IAMW), 331–351 (SVLA…SLAL), 363–383 (GILC…GALA), and 388–408 (IHLA…YGLI).

This sequence belongs to the major facilitator superfamily. FHS transporter (TC 2.A.1.7) family.

It is found in the cell inner membrane. Intake of glucose and galactose. The polypeptide is Glucose/galactose transporter (gluP) (Brucella abortus (strain 2308)).